We begin with the raw amino-acid sequence, 641 residues long: Single-strand DNA endonuclease 1 (641 aa).

The N-domain stretch occupies residues 1-90 (MGVKNLWDIL…SLKLATYRRR (90 aa)). Positions 2–97 (GVKNLWDILE…RRRLGSISHA (96 aa)) are XPG-N domain. Mg(2+)-binding residues include aspartate 30, aspartate 76, glutamate 144, glutamate 146, aspartate 165, aspartate 167, and aspartate 217. Residues 132–217 (MALGIPCLDG…ISLAVLLGSD (86 aa)) form an XPG-I domain region. I-domain stretches follow at residues 132–220 (MALG…DYSN) and 132–221 (MALG…YSNG). The 5'-3' exonuclease domain stretch occupies residues 217-350 (DYSNGVNGFG…ILPKIAEREL (134 aa)). 2 disordered regions span residues 428 to 448 (KGEE…QAAV) and 572 to 615 (VGSH…RVHH). Over residues 580–590 (DGGGGGGGGVA) the composition is skewed to gly residues.

This sequence belongs to the XPG/RAD2 endonuclease family. GEN subfamily. The cofactor is Mg(2+). In terms of tissue distribution, highly expressed in shoot apical meristem (SAM) and young leaves. Expressed in roots, flag leaf and panicles.

The protein localises to the nucleus. In terms of biological role, single-stranded DNA endonuclease activity in vitro. May not be active as double-stranded DNA endonuclease. Endonuclease which cleaves flap structures at the junction between single-stranded DNA and double-stranded DNA with a specific cleavage site in the 5' overhang strand exactly one nucleotide 3' of the branch point. Structure- and sequence-specific nuclease that resolves holliday junctions (HJs) by symmetrically oriented incisions in two opposing strands near the junction point, thus leading to ligatable products; HJs are physical links between homologous DNA molecules that arise as central intermediary structures during homologous recombination and repair in meiotic and somatic cells. Probably involved in the resolution of toxic replication structures to ensure genome stability, and to maintain telomere integrity and replication. The sequence is that of Single-strand DNA endonuclease 1 from Oryza sativa subsp. japonica (Rice).